We begin with the raw amino-acid sequence, 511 residues long: D-alanine--D-alanyl carrier protein ligase (511 aa).

152–153 (TS) contacts ATP. Residue Asp199 coordinates D-alanine. Residue 294–299 (NAYGPT) coordinates ATP. Residue Val303 coordinates D-alanine. Residues Asp385, 397 to 400 (YGGR), and Lys499 contribute to the ATP site. Residue Lys499 coordinates D-alanine.

Belongs to the ATP-dependent AMP-binding enzyme family. DltA subfamily.

It localises to the cytoplasm. The enzyme catalyses holo-[D-alanyl-carrier protein] + D-alanine + ATP = D-alanyl-[D-alanyl-carrier protein] + AMP + diphosphate. Its pathway is cell wall biogenesis; lipoteichoic acid biosynthesis. In terms of biological role, catalyzes the first step in the D-alanylation of lipoteichoic acid (LTA), the activation of D-alanine and its transfer onto the D-alanyl carrier protein (Dcp) DltC. In an ATP-dependent two-step reaction, forms a high energy D-alanyl-AMP intermediate, followed by transfer of the D-alanyl residue as a thiol ester to the phosphopantheinyl prosthetic group of the Dcp. D-alanylation of LTA plays an important role in modulating the properties of the cell wall in Gram-positive bacteria, influencing the net charge of the cell wall. This is D-alanine--D-alanyl carrier protein ligase from Streptococcus agalactiae serotype III (strain NEM316).